The sequence spans 1688 residues: Voltage-dependent L-type calcium channel subunit alpha-1S (1688 aa).

Positions M1–P24 are disordered. The Cytoplasmic segment spans residues M1–K51. One copy of the I repeat lies at N38–F335. The helical transmembrane segment at P52 to I70 threads the bilayer. At F71 to K88 the chain is on the extracellular side. N-linked (GlcNAc...) asparagine glycosylation is present at N80. Residues V89–Y108 form a helical membrane-spanning segment. Residues G109 to N120 are Cytoplasmic-facing. The chain crosses the membrane as a helical span at residues G121–L139. Residues E140 to N158 are Extracellular-facing. Residues V159–V177 form a helical membrane-spanning segment. Residues P178–H196 lie on the Cytoplasmic side of the membrane. Residues I197 to F216 traverse the membrane as a helical segment. Residues S217 to W307 are Extracellular-facing. An N-linked (GlcNAc...) asparagine glycan is attached at N255. Residue E290 coordinates Ca(2+). A helical membrane pass occupies residues P308–S332. Residues G333–R431 lie on the Cytoplasmic side of the membrane. The segment at Q355–E372 is binding to the beta subunit. The II repeat unit spans residues H417–L663. The chain crosses the membrane as a helical span at residues F432–T450. Residues E451–I465 lie on the Extracellular side of the membrane. The helical transmembrane segment at A466 to L485 threads the bilayer. Over G486–S493 the chain is Cytoplasmic. Residues L494–L512 form a helical membrane-spanning segment. The Extracellular segment spans residues V513–G522. A helical membrane pass occupies residues I523–W541. Over T542–S560 the chain is Cytoplasmic. Residues L561–F580 form a helical membrane-spanning segment. At G581–S635 the chain is on the extracellular side. Ca(2+) is bound at residue E613. A helical transmembrane segment spans residues V636–V660. Residues D661–T797 lie on the Cytoplasmic side of the membrane. Disordered regions lie at residues A672–E696 and E729–R755. The segment covering P740–E749 has biased composition (acidic residues). One copy of the III repeat lies at N784–F1066. A helical transmembrane segment spans residues T798–A816. The Extracellular portion of the chain corresponds to E817–K832. Residues L833–Y852 traverse the membrane as a helical segment. Topologically, residues G853 to N864 are cytoplasmic. A helical transmembrane segment spans residues S865 to I883. The Extracellular portion of the chain corresponds to E884–V890. Residues V891 to A909 traverse the membrane as a helical segment. The Cytoplasmic portion of the chain corresponds to K910–N928. A helical transmembrane segment spans residues I929–F948. Over K949–E1038 the chain is Extracellular. Residues R986–K1075 form a dihydropyridine binding region. Residue E1012 participates in Ca(2+) binding. The chain crosses the membrane as a helical span at residues I1039–I1063. The Cytoplasmic segment spans residues V1064–S1116. The IV repeat unit spans residues N1103–F1371. The chain crosses the membrane as a helical span at residues Y1117–M1135. Topologically, residues Q1136–I1150 are extracellular. The helical transmembrane segment at L1151–F1170 threads the bilayer. Over K1171 to D1178 the chain is Cytoplasmic. The helical transmembrane segment at P1179–L1197 threads the bilayer. At S1198–S1218 the chain is on the extracellular side. Residues I1219–G1237 traverse the membrane as a helical segment. Topologically, residues E1238–Y1256 are cytoplasmic. The helical transmembrane segment at V1257–F1276 threads the bilayer. Residues G1277–F1343 lie on the Extracellular side of the membrane. Residues L1324 to K1390 are dihydropyridine binding. Residues E1336–S1379 form a phenylalkylamine binding region. The helical transmembrane segment at A1344 to M1368 threads the bilayer. Residues D1369–N1688 are Cytoplasmic-facing. 2 disordered regions span residues P1635–T1664 and R1669–N1688. Residues D1678–N1688 are compositionally biased toward polar residues.

Belongs to the calcium channel alpha-1 subunit (TC 1.A.1.11) family. As to quaternary structure, multisubunit complex consisting of alpha-1, alpha-2, beta and delta subunits in a 1:1:1:1 ratio. The channel activity is directed by the pore-forming and voltage-sensitive alpha-1 subunit. In many cases, this subunit is sufficient to generate voltage-sensitive calcium channel activity. The auxiliary subunits beta and alpha-2/delta linked by a disulfide bridge regulate the channel activity. An additional gamma subunit is present only in skeletal muscle L-type channel. Phosphorylation by PKA stimulates the calcium channel function. In terms of tissue distribution, skeletal muscle specific.

Its subcellular location is the membrane. Functionally, voltage-sensitive calcium channels (VSCC) mediate the entry of calcium ions into excitable cells and are also involved in a variety of calcium-dependent processes, including muscle contraction, gene expression, cell motility, cell division and cell death. The isoform alpha-1S gives rise to L-type calcium currents. Long-lasting (L-type) calcium channels belong to the 'high-voltage activated' (HVA) group. They are blocked by dihydropyridines (DHP), phenylalkylamines, and by benzothiazepines. Calcium channels containing the alpha-1S subunit play an important role in excitation-contraction coupling in skele|tal muscle. This is Voltage-dependent L-type calcium channel subunit alpha-1S from Aquarana catesbeiana (American bullfrog).